The primary structure comprises 211 residues: Ethylene-responsive transcription factor LEP (211 aa).

2 disordered regions span residues 1 to 21 and 74 to 110; these read MNTT…TRFL and NFVY…NDPV. A DNA-binding region (AP2/ERF) is located at residues 19–76; it reads RFLGVRRRPWGRYAAEIRDPTTKERHWLGTFDTAEEAALAYDRAARSMRGTRARTNFV. The segment covering 81-92 has biased composition (low complexity); sequence PPSSSVTSIVSP. Pro residues predominate over residues 93 to 107; the sequence is DDPPPPPPPPAPPSN.

Belongs to the AP2/ERF transcription factor family. ERF subfamily. Expressed in germinating seeds. Present in young shoots, at low levels, especially in leaf primordia and developing leaf blades. Also detected in vascular tissue, mostly in xylem, of young leaves, petioles and hypocotyls.

The protein resides in the nucleus. Cell division-promoting factor involved in leaf blade differentiation, inflorescence branching, as well as in carpel and silique shape. Promotes the number of xylem cells. Positively regulates the gibberellin signaling pathway leading to germination, hypocotyl elongation, and leaf expansion. Probably acts as a transcriptional activator. Binds to the GCC-box pathogenesis-related promoter element. May be involved in the regulation of gene expression by stress factors and by components of stress signal transduction pathways. This Arabidopsis thaliana (Mouse-ear cress) protein is Ethylene-responsive transcription factor LEP (LEP).